A 70-amino-acid polypeptide reads, in one-letter code: MELAARMGETLTQAVVVAVREQLARRTGRTRSISLREELAAIGRRCAALPVLDTRAADTILGYDERGLPA.

Functionally, antitoxin component of a possible type II toxin-antitoxin (TA) system. The cognate toxin is VapC34. The sequence is that of Putative antitoxin VapB34 (vapB34) from Mycobacterium tuberculosis (strain CDC 1551 / Oshkosh).